Here is a 190-residue protein sequence, read N- to C-terminus: Protein PLANT CADMIUM RESISTANCE 8 (190 aa).

The segment at 1-31 (MGRVTTPSEEDSNNGLPVQQPGTPNQRTRVP) is disordered. The segment covering 13-28 (NNGLPVQQPGTPNQRT) has biased composition (polar residues). Thr23 carries the post-translational modification Phosphothreonine. The chain crosses the membrane as a helical span at residues 94–113 (LGTFMYLLMMPALCSHWVMG).

This sequence belongs to the cornifelin family.

The protein localises to the cell membrane. Functionally, may be involved in heavy metals transport. The polypeptide is Protein PLANT CADMIUM RESISTANCE 8 (PCR8) (Arabidopsis thaliana (Mouse-ear cress)).